A 449-amino-acid polypeptide reads, in one-letter code: MSALTESFGPVPSAKSKPPAARKPWYKLLYLQVLVAIVLGVLLGWLSPHIATNEWVKALGDGFVKLIKMVIAPIIFCTVVSGIAHIQDARKVGRVGVKALLYFEVVSSFALLIGLVVGNVVQIGHGLGATGDAAAVSKYVKQAEAQHSVDFVLNIIPDSVVGAFAKGDILQVLLFAILFGFALMTLGERGHRLRDVIDDASHAVFGVIAIVMKAAPVGAFGAMAFTIGKFGPAALGNLIGLIAVFYITAALFVVLVLGLIAKIVGFNIFKFLKYIKDELLIVLGTSSSESALPQLMEKLERLGCSKSVVGLVVPTGYSFNLDGTNIYMTLATLFIAQALGVDLTWTEQLTILLVAMLTSKGASGVSGAGFITLAATLSVVNPALVPGMAIVFSVDKFMSEVRALTNITGNGVATVFVSWWENELDHDKLAAALNKTIDPSDIETAVTTG.

A disordered region spans residues 1-20 (MSALTESFGPVPSAKSKPPA). Low complexity predominate over residues 10-20 (PVPSAKSKPPA). The next 8 membrane-spanning stretches (helical) occupy residues 28–48 (LLYLQVLVAIVLGVLLGWLSP), 66–86 (LIKMVIAPIIFCTVVSGIAHI), 101–121 (LYFEVVSSFALLIGLVVGNVV), 167–187 (GDILQVLLFAILFGFALMTLG), 205–225 (FGVIAIVMKAAPVGAFGAMAF), 241–261 (LIAVFYITAALFVVLVLGLIA), 326–346 (IYMTLATLFIAQALGVDLTWT), and 370–390 (FITLAATLSVVNPALVPGMAI).

This sequence belongs to the dicarboxylate/amino acid:cation symporter (DAACS) (TC 2.A.23) family.

It localises to the cell inner membrane. Functionally, responsible for the transport of dicarboxylates such as succinate, fumarate, and malate from the periplasm across the membrane. In Rhodopseudomonas palustris (strain BisB18), this protein is C4-dicarboxylate transport protein.